The sequence spans 510 residues: NAD(P)H-quinone oxidoreductase subunit 2 A, chloroplastic (510 aa).

The next 13 helical transmembrane spans lie at 24 to 44 (LLLFHGSFIFPECILIFGLIL), 57 to 77 (IPWLYFISSTSLVMSITALLF), 99 to 119 (IFQFLILLCSTLCIPLSVEYI), 124 to 144 (MAITEFLLFVLTATLGGMFLC), 149 to 169 (LITIFVAPECFSLCSYLLSGY), 183 to 203 (YLLMGGASSSILVHGFSWLYG), 229 to 249 (ISIALIFITVGIGFKLSPAPF), 295 to 315 (WHLLLEILAILSMILGNLIAI), 323 to 343 (MLAYSSIGQIGYVIIGIIVGD), 354 to 374 (YMLFYISMNLGTFACIVLFGL), 395 to 415 (ALSSALCLLSLGGLPPLAGFF), 418 to 438 (LYLFWCGWQAGLYFLVSIGLL), and 484 to 504 (MILCVIASTIPGISMNPIIAI).

It belongs to the complex I subunit 2 family. As to quaternary structure, NDH is composed of at least 16 different subunits, 5 of which are encoded in the nucleus.

It localises to the plastid. The protein resides in the chloroplast thylakoid membrane. The enzyme catalyses a plastoquinone + NADH + (n+1) H(+)(in) = a plastoquinol + NAD(+) + n H(+)(out). The catalysed reaction is a plastoquinone + NADPH + (n+1) H(+)(in) = a plastoquinol + NADP(+) + n H(+)(out). In terms of biological role, NDH shuttles electrons from NAD(P)H:plastoquinone, via FMN and iron-sulfur (Fe-S) centers, to quinones in the photosynthetic chain and possibly in a chloroplast respiratory chain. The immediate electron acceptor for the enzyme in this species is believed to be plastoquinone. Couples the redox reaction to proton translocation, and thus conserves the redox energy in a proton gradient. The sequence is that of NAD(P)H-quinone oxidoreductase subunit 2 A, chloroplastic from Piper cenocladum (Ant piper).